The following is a 357-amino-acid chain: Alkanal monooxygenase alpha chain (357 aa).

Belongs to the bacterial luciferase oxidoreductase family. Heterodimer of an alpha and a beta chain.

It carries out the reaction a long-chain fatty aldehyde + FMNH2 + O2 = a long-chain fatty acid + hnu + FMN + H2O + 2 H(+). Light-emitting reaction in luminous bacteria. This is Alkanal monooxygenase alpha chain (luxA) from Kryptophanaron alfredi symbiont.